The primary structure comprises 451 residues: Phosphoglucosamine mutase (451 aa).

Ser107 (phosphoserine intermediate) is an active-site residue. The Mg(2+) site is built by Ser107, Asp246, Asp248, and Asp250. Position 107 is a phosphoserine (Ser107).

It belongs to the phosphohexose mutase family. Requires Mg(2+) as cofactor. Post-translationally, activated by phosphorylation.

The enzyme catalyses alpha-D-glucosamine 1-phosphate = D-glucosamine 6-phosphate. Its function is as follows. Catalyzes the conversion of glucosamine-6-phosphate to glucosamine-1-phosphate. This is Phosphoglucosamine mutase from Burkholderia cenocepacia (strain ATCC BAA-245 / DSM 16553 / LMG 16656 / NCTC 13227 / J2315 / CF5610) (Burkholderia cepacia (strain J2315)).